A 137-amino-acid polypeptide reads, in one-letter code: MPPKSRASGPKKTQKSRRRDKKNVPHGNAHIKSTFNNTIVSITDPNGNVISWASSGHVGFKGSRKSTPFAAQLAAENAARKAQEHGVKKVDVFVKGPGSGRETAIRSLQAAGLEVGTISDVTPQPHNGCRPPKRRRV.

2 disordered regions span residues 1–32 and 118–137; these read MPPK…AHIK and ISDV…RRRV. Over residues 12-21 the composition is skewed to basic residues; that stretch reads KTQKSRRRDK.

Belongs to the universal ribosomal protein uS11 family. As to quaternary structure, part of the 30S ribosomal subunit. Interacts with proteins S7 and S18. Binds to IF-3.

Located on the platform of the 30S subunit, it bridges several disparate RNA helices of the 16S rRNA. Forms part of the Shine-Dalgarno cleft in the 70S ribosome. The protein is Small ribosomal subunit protein uS11 of Nocardia farcinica (strain IFM 10152).